Here is a 547-residue protein sequence, read N- to C-terminus: Chaperonin GroEL (547 aa).

ATP-binding positions include 30-33, lysine 51, 87-91, glycine 415, and aspartate 495; these read TLGP and DGTTT. The disordered stretch occupies residues 526–547; it reads QDATPTASPDMGGMGGMGGGMM. A compositionally biased stretch (gly residues) spans 537–547; sequence GGMGGMGGGMM.

It belongs to the chaperonin (HSP60) family. As to quaternary structure, forms a cylinder of 14 subunits composed of two heptameric rings stacked back-to-back. Interacts with the co-chaperonin GroES.

It localises to the cytoplasm. The enzyme catalyses ATP + H2O + a folded polypeptide = ADP + phosphate + an unfolded polypeptide.. Functionally, together with its co-chaperonin GroES, plays an essential role in assisting protein folding. The GroEL-GroES system forms a nano-cage that allows encapsulation of the non-native substrate proteins and provides a physical environment optimized to promote and accelerate protein folding. The sequence is that of Chaperonin GroEL from Vesicomyosocius okutanii subsp. Calyptogena okutanii (strain HA).